The primary structure comprises 308 residues: Eukaryotic translation initiation factor 3 subunit G-A (308 aa).

Disordered stretches follow at residues 1–35 (MPTGDYDSKPSWADQVEEEGIDAEPLSPQIRKPDP) and 177–226 (TGDK…ADDN). Over residues 185 to 194 (GAEPEPAQAP) the composition is skewed to low complexity. Residues 209 to 226 (GGSRRGESMQPNRRADDN) are compositionally biased toward basic and acidic residues. Residues 227–305 (ATIRVTNLSE…LILNVEWAKP (79 aa)) enclose the RRM domain.

It belongs to the eIF-3 subunit G family. As to quaternary structure, component of the eukaryotic translation initiation factor 3 (eIF-3) complex, which is composed of 13 subunits: eif3a, eif3b, eif3c, eif3d, eif3e, eif3f, eif3g, eif3h, eif3i, eif3j, eif3k, eif3l and eif3m.

The protein localises to the cytoplasm. Its function is as follows. RNA-binding component of the eukaryotic translation initiation factor 3 (eIF-3) complex, which is involved in protein synthesis of a specialized repertoire of mRNAs and, together with other initiation factors, stimulates binding of mRNA and methionyl-tRNAi to the 40S ribosome. The eIF-3 complex specifically targets and initiates translation of a subset of mRNAs involved in cell proliferation. This subunit can bind 18S rRNA. This is Eukaryotic translation initiation factor 3 subunit G-A (eif3g-a) from Xenopus laevis (African clawed frog).